Consider the following 416-residue polypeptide: Glutamyl-tRNA reductase (416 aa).

Substrate is bound by residues 49–52 (TCNR), Ser-105, 110–112 (ETQ), and Gln-116. Catalysis depends on Cys-50, which acts as the Nucleophile. 185–190 (GAGEMI) lines the NADP(+) pocket.

The protein belongs to the glutamyl-tRNA reductase family. In terms of assembly, homodimer.

The enzyme catalyses (S)-4-amino-5-oxopentanoate + tRNA(Glu) + NADP(+) = L-glutamyl-tRNA(Glu) + NADPH + H(+). It functions in the pathway porphyrin-containing compound metabolism; protoporphyrin-IX biosynthesis; 5-aminolevulinate from L-glutamyl-tRNA(Glu): step 1/2. Functionally, catalyzes the NADPH-dependent reduction of glutamyl-tRNA(Glu) to glutamate 1-semialdehyde (GSA). In Thiobacillus denitrificans (strain ATCC 25259 / T1), this protein is Glutamyl-tRNA reductase.